A 542-amino-acid polypeptide reads, in one-letter code: MTTQIPVPPVVSDQALPDRISDRLKGQIIVILDFGSQYSELIARRIRETEVYSEVLSYRTTAQQLREIKPKGIILSGGPNSVYDQGAPECDPEIFQLGVPVLGVCYGMQLMVKQLGGRVERAKRGEYGKASLHIDDPTDLLTNVENDSTMWMSHGDSCVDLPTGFEILAHTDNTPCAAIADHQKALFGVQFHPEVVHSVGGIALIRNFVYHICHCEPTWTTAAFIEESIREVRSQVGDRRVLLALSGGVDSSTLAFLLHRAIGDNLTCMFIDQGFMRKGEPERLVELFDHQFHIPVQYVNARDRFLKQLEGVTDPEEKRRLIGHEFIQVFEEESNRLGPFDYLAQGTLYPDVIESADSNVDPKTGERVAVKIKSHHNVGGLPKNLRFKLVEPLRKLFKDEVRKLGRSIGLPEEIVRRHPFPGPGLAIRIIGEVTSERLNILRDADFIVRDEISKRGIYHDYWQAFAVLLPIRSVGVMGDKRTYAHPVVLRFITSEDGMTADWARVPYDILEAISNRIVNEVKGVNRVVYDITSKPPGTIEWE.

Residues 28–218 enclose the Glutamine amidotransferase type-1 domain; that stretch reads IIVILDFGSQ…VYHICHCEPT (191 aa). Residue Cys-105 is the Nucleophile of the active site. Active-site residues include His-192 and Glu-194. A GMPS ATP-PPase domain is found at 219–417; the sequence is WTTAAFIEES…IGLPEEIVRR (199 aa). 246–252 provides a ligand contact to ATP; the sequence is SGGVDSS.

Homodimer.

The enzyme catalyses XMP + L-glutamine + ATP + H2O = GMP + L-glutamate + AMP + diphosphate + 2 H(+). It functions in the pathway purine metabolism; GMP biosynthesis; GMP from XMP (L-Gln route): step 1/1. Catalyzes the synthesis of GMP from XMP. This Synechocystis sp. (strain ATCC 27184 / PCC 6803 / Kazusa) protein is GMP synthase [glutamine-hydrolyzing] (guaA).